The following is a 309-amino-acid chain: Glutaminase (309 aa).

Residues S64, N114, E160, N167, Y191, Y243, and V261 each contribute to the substrate site.

The protein belongs to the glutaminase family. In terms of assembly, homotetramer.

The enzyme catalyses L-glutamine + H2O = L-glutamate + NH4(+). This is Glutaminase from Methylobacterium radiotolerans (strain ATCC 27329 / DSM 1819 / JCM 2831 / NBRC 15690 / NCIMB 10815 / 0-1).